Reading from the N-terminus, the 366-residue chain is Flagellar P-ring protein (366 aa).

The first 23 residues, Met1–Ala23, serve as a signal peptide directing secretion.

The protein belongs to the FlgI family. The basal body constitutes a major portion of the flagellar organelle and consists of four rings (L,P,S, and M) mounted on a central rod.

Its subcellular location is the periplasm. The protein localises to the bacterial flagellum basal body. In terms of biological role, assembles around the rod to form the L-ring and probably protects the motor/basal body from shearing forces during rotation. In Idiomarina loihiensis (strain ATCC BAA-735 / DSM 15497 / L2-TR), this protein is Flagellar P-ring protein.